A 233-amino-acid chain; its full sequence is Pyridoxal phosphate homeostasis protein (233 aa).

K35 is subject to N6-(pyridoxal phosphate)lysine.

It belongs to the pyridoxal phosphate-binding protein YggS/PROSC family.

In terms of biological role, pyridoxal 5'-phosphate (PLP)-binding protein, which is involved in PLP homeostasis. The protein is Pyridoxal phosphate homeostasis protein of Pasteurella multocida (strain Pm70).